The sequence spans 55 residues: MAKAVTIKIKLVSTADTGFYYVAKKNSRTMTDKMVKKKYDPVARKHVEFKESKIK.

The protein belongs to the bacterial ribosomal protein bL33 family.

The polypeptide is Large ribosomal subunit protein bL33 (Rhodopseudomonas palustris (strain BisB18)).